We begin with the raw amino-acid sequence, 332 residues long: Anthranilate phosphoribosyltransferase (332 aa).

5-phospho-alpha-D-ribose 1-diphosphate-binding positions include glycine 79, 82–83 (GD), serine 87, 89–92 (NIST), 107–115 (KHGNRSVSS), and serine 119. An anthranilate-binding site is contributed by glycine 79. Position 91 (serine 91) interacts with Mg(2+). Asparagine 110 serves as a coordination point for anthranilate. Arginine 165 lines the anthranilate pocket. The Mg(2+) site is built by aspartate 223 and glutamate 224.

Belongs to the anthranilate phosphoribosyltransferase family. In terms of assembly, homodimer. It depends on Mg(2+) as a cofactor.

It carries out the reaction N-(5-phospho-beta-D-ribosyl)anthranilate + diphosphate = 5-phospho-alpha-D-ribose 1-diphosphate + anthranilate. Its pathway is amino-acid biosynthesis; L-tryptophan biosynthesis; L-tryptophan from chorismate: step 2/5. Catalyzes the transfer of the phosphoribosyl group of 5-phosphorylribose-1-pyrophosphate (PRPP) to anthranilate to yield N-(5'-phosphoribosyl)-anthranilate (PRA). This chain is Anthranilate phosphoribosyltransferase, found in Sodalis glossinidius (strain morsitans).